The chain runs to 570 residues: Serine/threonine-protein kinase Pink1, mitochondrial (570 aa).

Residues 1-5 (MSVRA) constitute a mitochondrion transit peptide. Residues 6–96 (VGSRLFKHGR…AELRKKATRR (91 aa)) are Mitochondrial intermembrane-facing. Residues 97 to 120 (ILFGDSAPFFALVGVSIASGTGIL) traverse the membrane as a helical segment. Over 121–570 (TKEEELEGVC…WIQENLPELD (450 aa)) the chain is Cytoplasmic. Positions 162–484 (LSLGKPIAKG…VAANVCQLFL (323 aa)) constitute a Protein kinase domain. Lys196 is an ATP binding site. Ser205 bears the Phosphoserine; by autocatalysis mark. Glu217 is a Mg(2+) binding site. Residues Lys295, Tyr297, and Asn300 each coordinate ATP. The active-site Proton acceptor is the Asp337. ATP is bound at residue Asp341. 2 residues coordinate Mg(2+): Asn342 and Asp359. Position 359 (Asp359) interacts with ATP. The residue at position 377 (Ser377) is a Phosphoserine; by autocatalysis. Thr386 is subject to Phosphothreonine; by autocatalysis. Residue Thr530 is modified to Phosphothreonine.

This sequence belongs to the protein kinase superfamily. Ser/Thr protein kinase family. Mg(2+) serves as cofactor. In terms of processing, proteolytically cleaved. In healthy cells, the precursor is continuously imported into mitochondria where it is proteolytically cleaved into its short form by the mitochondrial rhomboid protease rho-7 (TcasGA2_TC013516). The short form is then released into the cytosol where it rapidly undergoes proteasome-dependent degradation. In unhealthy cells, when cellular stress conditions lead to the loss of mitochondrial membrane potential, mitochondrial import is impaired leading to the precursor accumulating on the outer mitochondrial membrane (OMM). Autophosphorylated on Ser-205, which activates kinase activity and is required for substrate recognition. Loss of mitochondrial membrane potential results in the precursor accumulating on the outer mitochondrial membrane (OMM) where it is activated by autophosphorylation at Ser-205. Autophosphorylation is sufficient and essential for selective recruitment of park to depolarized mitochondria, likely via Pink1-dependent phosphorylation of polyubiquitin chains. Also autophosphorylated at Ser-377, Thr-386 and possibly Thr-530. Another report found evidence of autophosphorylation at Ser-154, Thr-186, Thr-218, Ser-267 and Thr-530, as well as a number of other minor sites, but determined that phosphorylation at these sites is not required for enzyme activity and may not occur in vivo.

It is found in the mitochondrion outer membrane. It localises to the mitochondrion inner membrane. The protein localises to the cytoplasm. The protein resides in the cytosol. It catalyses the reaction L-seryl-[protein] + ATP = O-phospho-L-seryl-[protein] + ADP + H(+). It carries out the reaction L-threonyl-[protein] + ATP = O-phospho-L-threonyl-[protein] + ADP + H(+). Acts as a serine/threonine-protein kinase. Exhibits a substrate preference for proline at position P+1 and a general preference at several residues for basic residues such as arginine. Also exhibits moderate preferences for a phosphotyrosine at position P-3 and a tryptophan at P-5. Critical to mitochondrial homeostasis it mediates several pathways that maintain mitochondrial health and function. Protects against mitochondrial dysfunction during cellular stress by phosphorylating mitochondrial proteins such as park and likely Drp1, to coordinate mitochondrial quality control mechanisms that remove and replace dysfunctional mitochondrial components. Depending on the severity of mitochondrial damage and/or dysfunction, activity ranges from preventing apoptosis and stimulating mitochondrial biogenesis to regulating mitochondrial dynamics and eliminating severely damaged mitochondria via mitophagy. Appears to be particularly important in maintaining the physiology and function of cells with high energy demands that are undergoing stress or altered metabolic environment, including spermatids, muscle cells and neurons such as the dopaminergic (DA) neurons. Mediates the translocation and activation of park at the outer membrane (OMM) of dysfunctional/depolarized mitochondria. At the OMM of damaged mitochondria, phosphorylates pre-existing polyubiquitin chains, the Pink1-phosphorylated polyubiquitin then recruits park from the cytosol to the OMM where park is fully activated by phosphorylation at 'Ser-80' by Pink1. When cellular stress results in irreversible mitochondrial damage, functions with park to promote the clearance of dysfunctional and/or depolarized mitochondria by selective autophagy (mitophagy). The Pink1-park pathway also promotes fission and/or inhibits fusion of damaged mitochondria, by phosphorylating and thus promoting the park-dependent degradation of proteins involved in mitochondrial fusion/fission such as Marf, Opa1 and fzo. This prevents the refusion of unhealthy mitochondria with the mitochondrial network or initiates mitochondrial fragmentation facilitating their later engulfment by autophagosomes. Also likely to promote mitochondrial fission independently of park and Atg7-mediated mitophagy, via the phosphorylation and activation of Drp1. Regulates motility of damaged mitochondria by phosphorylating Miro which likely promotes its park-dependent degradation by the proteasome; in motor neurons, this inhibits mitochondrial intracellular anterograde transport along the axons which probably increases the chance of the mitochondria being eliminated in the soma. The Pink1-park pathway is also involved in mitochondrial regeneration processes such as promoting mitochondrial biogenesis, activating localized mitochondrial repair, promoting selective turnover of mitochondrial proteins and initiating the mitochondrial import of endogenous proteins. Involved in mitochondrial biogenesis by promoting the park-dependent ubiquitination of transcriptional repressor Paris which leads to its subsequent proteasomal degradation and allows activation of the transcription factor srl. Functions with park to promote localized mitochondrial repair by activating the translation of specific nuclear-encoded mitochondrial RNAs (nc-mtRNAs) on the mitochondrial surface, including several key electron transport chain component nc-mtRNAs. During oogenesis, phosphorylates and inactivates larp on the membrane of defective mitochondria, thus impairing local translation and mtDNA replication and consequently, reducing transmission of deleterious mtDNA mutations to the mature oocyte. Phosphorylates the mitochondrial acyl-CoA dehydrogenase Mcad, and appears to be important for maintaining fatty acid and amino acid metabolism via a mechanism that is independent of it's role in maintaining production of ATP. The sequence is that of Serine/threonine-protein kinase Pink1, mitochondrial from Tribolium castaneum (Red flour beetle).